The chain runs to 375 residues: Serpin B5 (375 aa).

N-linked (GlcNAc...) asparagine glycans are attached at residues Asn99, Asn133, Asn155, Asn188, and Asn361.

This sequence belongs to the serpin family. Ov-serpin subfamily. As to quaternary structure, interacts with IRF6.

The protein resides in the secreted. It is found in the extracellular space. Functionally, tumor suppressor. It blocks the growth, invasion, and metastatic properties of mammary tumors. As it does not undergo the S (stressed) to R (relaxed) conformational transition characteristic of active serpins, it exhibits no serine protease inhibitory activity. In Plecturocebus moloch (Dusky titi monkey), this protein is Serpin B5 (SERPINB5).